The chain runs to 335 residues: MNKLMLMLITFATSLLAQTNKASTGLKTDQSFNNSLSESVKLKEIADIYPTNTNFLTGIGIVAGLAGKGDSIKQKDLIIKILEENNIINEIGSNNIESKNIALVNVSLQVKGNTIKGSKHKACVASILDSKDLTNGILLKTNLKNKEGEIIAIASGITQPNNKLKGSGYTIDSVIINENQNINHSYNIILKKGNYTLINRIHKILTSKKINNKIKSDSTIEIEAKNISLLEEIENIKIETNPKILIDKKNGIILASENAKIGTFTFSIEKDNQNIFLSKNNKTTIQVNSMKLNEFILKNSNNLSNKELIQIIQAAQKINKLNGELILEEIDGNQN.

The signal sequence occupies residues 1 to 17; that stretch reads MNKLMLMLITFATSLLA.

The protein belongs to the FlgI family. The basal body constitutes a major portion of the flagellar organelle and consists of four rings (L,P,S, and M) mounted on a central rod.

It localises to the periplasm. It is found in the bacterial flagellum basal body. Functionally, assembles around the rod to form the L-ring and probably protects the motor/basal body from shearing forces during rotation. The sequence is that of Flagellar P-ring protein (flgI) from Borreliella burgdorferi (strain ATCC 35210 / DSM 4680 / CIP 102532 / B31) (Borrelia burgdorferi).